The following is a 482-amino-acid chain: Probable cytosol aminopeptidase (482 aa).

Mn(2+) contacts are provided by lysine 251 and aspartate 256. Lysine 263 is an active-site residue. Residues aspartate 274, aspartate 333, and glutamate 335 each contribute to the Mn(2+) site. Arginine 337 is an active-site residue.

The protein belongs to the peptidase M17 family. Requires Mn(2+) as cofactor.

Its subcellular location is the cytoplasm. The catalysed reaction is Release of an N-terminal amino acid, Xaa-|-Yaa-, in which Xaa is preferably Leu, but may be other amino acids including Pro although not Arg or Lys, and Yaa may be Pro. Amino acid amides and methyl esters are also readily hydrolyzed, but rates on arylamides are exceedingly low.. It catalyses the reaction Release of an N-terminal amino acid, preferentially leucine, but not glutamic or aspartic acids.. In terms of biological role, presumably involved in the processing and regular turnover of intracellular proteins. Catalyzes the removal of unsubstituted N-terminal amino acids from various peptides. This is Probable cytosol aminopeptidase from Acinetobacter baumannii (strain SDF).